The sequence spans 352 residues: MVKLKGLRQINPYVAGQQPNERDMIKLNTNENAYGPSPKVAEALQNFDDQELRKYSSLDQTELCQALAANLGVSPDQLIIGNGSDDILSMAFLAFFNSGESVLFPDLTYGFYKVWADLYHVPFREIPLTDDFEVHPSDYFGDNGGIILANPNAPTGIYLPLEQLEEILASNQDVVVVVDEAYIHFGGQSALPLLETYPNLFITRTFSKDAALAGLRVGYGLGHPDLIAVMKAVKDSINPYSVDLLAESLALAAVQDWDYYLETGRAIQETRDWFAGELAALDFQVLTSQTNFVLAQPSGISAAELFQQLEERRIYVRYFPKAERIKDFLRISIGRREEMETVLAAIEEICSS.

At K208 the chain carries N6-(pyridoxal phosphate)lysine.

This sequence belongs to the class-II pyridoxal-phosphate-dependent aminotransferase family. Histidinol-phosphate aminotransferase subfamily. In terms of assembly, homodimer. The cofactor is pyridoxal 5'-phosphate.

The catalysed reaction is L-histidinol phosphate + 2-oxoglutarate = 3-(imidazol-4-yl)-2-oxopropyl phosphate + L-glutamate. It functions in the pathway amino-acid biosynthesis; L-histidine biosynthesis; L-histidine from 5-phospho-alpha-D-ribose 1-diphosphate: step 7/9. This Streptococcus sanguinis (strain SK36) protein is Histidinol-phosphate aminotransferase.